A 195-amino-acid polypeptide reads, in one-letter code: HTH-type transcriptional regulator BetI (195 aa).

Residues 8 to 68 (PIRRQQLIEA…ATMRYLISHL (61 aa)) form the HTH tetR-type domain. A DNA-binding region (H-T-H motif) is located at residues 31 to 50 (SIVQIARRAGVSNGIISHYF).

The protein operates within amine and polyamine biosynthesis; betaine biosynthesis via choline pathway [regulation]. Repressor involved in the biosynthesis of the osmoprotectant glycine betaine. It represses transcription of the choline transporter BetT and the genes of BetAB involved in the synthesis of glycine betaine. This chain is HTH-type transcriptional regulator BetI, found in Pectobacterium carotovorum subsp. carotovorum (strain PC1).